Reading from the N-terminus, the 198-residue chain is Ribonuclease HII (198 aa).

Residues 11-198 (NLIAGVDEVG…GPVKRVLGLV (188 aa)) enclose the RNase H type-2 domain. Residues Asp-17, Glu-18, and Asp-109 each contribute to the a divalent metal cation site.

It belongs to the RNase HII family. Requires Mn(2+) as cofactor. Mg(2+) serves as cofactor.

The protein localises to the cytoplasm. It carries out the reaction Endonucleolytic cleavage to 5'-phosphomonoester.. Its function is as follows. Endonuclease that specifically degrades the RNA of RNA-DNA hybrids. This is Ribonuclease HII from Yersinia pseudotuberculosis serotype O:3 (strain YPIII).